The following is a 495-amino-acid chain: SYDSFGDRVTIIVFGASGDLARKKTFPALFGLFREKQLPSTVQIIGYARSHLSDKDFKDYISSHFKGGDDKTKEDFLNLCSYISDPYDTDEGYKKLEARCQEYESKHNVKVPERLFYLALPPSVFHTVCEQVKKNVYPKNEKSRIIIEKPFGRDLETYRELQKQISPLFTEDEVYRIDHYLGKEMVKNLLVLRFGNELFSGIWNNKHITSVQISFKEAFGTEGRGGYFDNIGIIRDVMQNHLLQVLTLLTMERPVSFDPEAVRDEKVKVLKAFDKIDVNDVLLGQYGKSEDGTKPGYLDDSTVKPNSKAVTYAAFRVNIHNERWDGVPIVLRAGKALDEGKAEIRIQFKPVAKGMFKEIQRNELVIRIQPNEAIYLKINSKIPGISTETSLTDLDLTYSTRYSKDFWIPEAYEALIRDCYLGNHSNFVRDDELEVSWKLFTPLLEAVEKEENVKLESYPYGSKGPKELRKYLIDHGYVFNDPGTYQWPLTNTDVK.

Ser1 bears the N-acetylserine mark. Residues 15–22 (GASGDLAR), Arg49, and Lys149 each bind NADP(+). D-glucose 6-phosphate contacts are provided by residues Lys149, 179–183 (HYLGK), Glu217, and Asp236. The active-site Proton acceptor is the His241. An NADP(+)-binding site is contributed by Arg332. Lys335 lines the D-glucose 6-phosphate pocket. Residues Lys341, Arg345, and Arg367 each contribute to the NADP(+) site. Residue Gln369 coordinates D-glucose 6-phosphate. Residues 375–377 (YLK), 395–397 (DLT), and Lys463 contribute to the NADP(+) site.

The protein belongs to the glucose-6-phosphate dehydrogenase family.

It catalyses the reaction D-glucose 6-phosphate + NADP(+) = 6-phospho-D-glucono-1,5-lactone + NADPH + H(+). Its pathway is carbohydrate degradation; pentose phosphate pathway; D-ribulose 5-phosphate from D-glucose 6-phosphate (oxidative stage): step 1/3. Functionally, catalyzes the rate-limiting step of the oxidative pentose-phosphate pathway, which represents a route for the dissimilation of carbohydrates besides glycolysis. The main function of this enzyme is to provide reducing power (NADPH) and pentose phosphates for fatty acid and nucleic acid synthesis. The chain is Glucose-6-phosphate 1-dehydrogenase from Cyberlindnera jadinii (Torula yeast).